Reading from the N-terminus, the 572-residue chain is Protein 5NUC (572 aa).

Residues 1–25 form the signal peptide; the sequence is MLFFLNFFVLVFSIELALLTASAAA. Residues aspartate 39 and histidine 41 each contribute to the Zn(2+) site. Cysteine 54 and cysteine 64 are joined by a disulfide. The N-linked (GlcNAc...) asparagine glycan is linked to asparagine 82. Zn(2+)-binding residues include aspartate 93, asparagine 125, histidine 227, and histidine 250. Cysteines 360 and 365 form a disulfide. Positions 361, 399, 404, and 427 each coordinate substrate. Asparagine 454 and asparagine 490 each carry an N-linked (GlcNAc...) asparagine glycan. The cysteines at positions 488 and 491 are disulfide-linked. 512–518 is a binding site for substrate; the sequence is FMKDGGD.

It belongs to the 5'-nucleotidase family. The cofactor is Zn(2+).

The catalysed reaction is UDP-sugar + H2O = UMP + alpha-D-aldose 1-phosphate.. It catalyses the reaction a ribonucleoside 5'-phosphate + H2O = a ribonucleoside + phosphate. In terms of biological role, degradation of external UDP-glucose to uridine monophosphate and glucose-1-phosphate, which can then be used by the cell. The protein is Protein 5NUC (5NUC) of Lutzomyia longipalpis (Sand fly).